The following is a 726-amino-acid chain: E3 SUMO-protein ligase SIZ2 (726 aa).

The SAP domain maps to 43–77 (MEQLKVLELKQICKSLDLSITGKKAVLQDRIKQFL). The PINIT domain occupies 139-291 (TALPPYSQQQ…SISCFIVEVF (153 aa)). The segment at 323 to 408 (DDDDIITTST…IQNCNEDVEQ (86 aa)) adopts an SP-RING-type zinc-finger fold. Residues Cys354, His356, Cys377, and Cys380 each coordinate Zn(2+). The tract at residues 507-533 (PSESEGSSDYNPNHTSTPKGSPTMDQD) is disordered. The segment covering 510–533 (SEGSSDYNPNHTSTPKGSPTMDQD) has biased composition (polar residues).

It belongs to the PIAS family. As to quaternary structure, interacts with CDC12. Autosumoylated upon ethanol stress.

The protein resides in the nucleus. It participates in protein modification; protein sumoylation. Its function is as follows. May act as an E3 ligase mediating SUMO/Smt3 attachment to septins. May be involved in chromosome maintenance. The polypeptide is E3 SUMO-protein ligase SIZ2 (NFI1) (Saccharomyces cerevisiae (strain ATCC 204508 / S288c) (Baker's yeast)).